The following is a 144-amino-acid chain: Large ribosomal subunit protein uL15 (144 aa).

Residues 1-54 form a disordered region; the sequence is MRLNTLSPAEGSKKAGKRLGRGIGSGLGKTGGRGHKGQKSRSGGGVRRGFEGGQ. The segment covering 21–31 has biased composition (gly residues); the sequence is RGIGSGLGKTG.

It belongs to the universal ribosomal protein uL15 family. In terms of assembly, part of the 50S ribosomal subunit.

Functionally, binds to the 23S rRNA. The protein is Large ribosomal subunit protein uL15 of Salmonella arizonae (strain ATCC BAA-731 / CDC346-86 / RSK2980).